The following is a 451-amino-acid chain: MAGVAGGGGNGNDFQWCFSQVQGAVDEDVAEADIISTVEFNYSGDLLATGDKGGRVVIFQREQENKSRPHSRGEYNVYSTFQSHEPEFDYLKSLEIEEKINKIRWLPQQNAAHFLLSTNDKTIKLWKISERDKRAEGYNLKDEDGRLRDPFKITALRVPILKPMDLMVEASPRRIFANAHTYHINSISVNSDHETYLSADDLRINLWHLEITDRSFNIVDIKPANMEELTEVITAAEFHPHHCNVFVYSSSKGTIRLCDMRSSALCDRHSKFFEEPEDPSSRSFFSEIISSISDVKFSHSGRYMMTRDYLSVKVWDLNMENRPVETYQVHEYLRSKLCSLYENDCIFDKFECCWNGSDGAIMTGSYNNFFRMFDRNTRRDITLEASRESSKPRAILKPRKVCTGGKRKKDEINVDSLDFNKKILHTAWHPMENIIAVAATNNLYIFQDKIN.

WD repeat units lie at residues 30 to 69, 95 to 136, 179 to 217, 228 to 268, 287 to 325, 342 to 383, and 418 to 451; these read AEAD…KSRP, EIEE…KRAE, AHTY…RSFN, ELTE…LCDR, EIIS…RPVE, ENDC…DITL, and DFNK…DKIN.

Belongs to the phosphatase 2A regulatory subunit B family. In terms of assembly, PP2A consists of a common heterodimeric core enzyme, composed of a 36 kDa catalytic subunit (subunit C) and a 65 kDa constant regulatory subunit (PR65 or subunit A), that associates with a variety of regulatory subunits.

The protein resides in the cytoplasm. Substrate-recognition subunit of protein phosphatase 2A (PP2A) that plays a key role in cell cycle by controlling mitosis entry and exit. The activity of PP2A complexes containing PPP2R2D (PR55-delta) fluctuate during the cell cycle: the activity is high in interphase and low in mitosis. The sequence is that of Serine/threonine-protein phosphatase 2A 55 kDa regulatory subunit B delta isoform (PPP2R2D) from Gallus gallus (Chicken).